We begin with the raw amino-acid sequence, 362 residues long: Trans-enoyl reductase phm4 (362 aa).

An NADP(+)-binding site is contributed by 50–53 (VDAK). 136–143 (TCFMTCGL) lines the substrate pocket. NADP(+) is bound by residues 171 to 174 (ATAT), 194 to 197 (SPHS), Y212, and 259 to 260 (LD). 280-284 (GPIML) is a binding site for substrate. 349 to 350 (VN) is a binding site for NADP(+).

Belongs to the zinc-containing alcohol dehydrogenase family. As to quaternary structure, monomer.

The protein operates within secondary metabolite biosynthesis. Functionally, trans-enoyl reductase; part of the gene cluster that mediates the biosynthesis of the trans-fused decalin-containing tetramic acid phomasetin, the stereochemical opposite of the HIV-1 integrase inhibitor equisetin. The PKS module of phm1 together with the enoylreductase phm4 catalyze the formation of the polyketide unit which is then conjugated to L-serine by the condensation domain of the phm1 NRPS module. Activity of the Dieckmann cyclase domain (RED) of phm1 results in release of the Dieckmann product intermediate. The Diels-Alderase phm7 then uses the Dieckmann product of phm1 as substrate and catalyzes the Diels-Alder cycloaddition to form the decalin ring of N-desmethylphomasetin. N-desmethylphomasetin is further methylated to phomasetin by the methyltransferase phm5. This is Trans-enoyl reductase phm4 from Pyrenochaetopsis sp.